The chain runs to 435 residues: Ribulose bisphosphate carboxylase/oxygenase activase 2, chloroplastic (435 aa).

The transit peptide at 1 to 56 directs the protein to the chloroplast; sequence MAAAYSTVGAVNRAPLSLNGSGARASLVPSTAFFGSSLKKSAAKFPKASSGNFKIV. Residue 165–172 participates in ATP binding; it reads GGKGQGKS.

Belongs to the RuBisCO activase family.

The protein resides in the plastid. It localises to the chloroplast stroma. In terms of biological role, activation of RuBisCO (ribulose-1,5-bisphosphate carboxylase/oxygenase; EC 4.1.1.39) involves the ATP-dependent carboxylation of the epsilon-amino group of lysine leading to a carbamate structure. This Larrea tridentata (Creosote bush) protein is Ribulose bisphosphate carboxylase/oxygenase activase 2, chloroplastic (RCA2).